The primary structure comprises 190 residues: Pyridoxal 5'-phosphate synthase subunit PdxT (190 aa).

46 to 48 (GES) contributes to the L-glutamine binding site. The active-site Nucleophile is the Cys-78. L-glutamine-binding positions include Arg-105 and 133–134 (IR). Residues His-169 and Glu-171 each act as charge relay system in the active site.

Belongs to the glutaminase PdxT/SNO family. In the presence of PdxS, forms a dodecamer of heterodimers. Only shows activity in the heterodimer.

The enzyme catalyses aldehydo-D-ribose 5-phosphate + D-glyceraldehyde 3-phosphate + L-glutamine = pyridoxal 5'-phosphate + L-glutamate + phosphate + 3 H2O + H(+). The catalysed reaction is L-glutamine + H2O = L-glutamate + NH4(+). Its pathway is cofactor biosynthesis; pyridoxal 5'-phosphate biosynthesis. Catalyzes the hydrolysis of glutamine to glutamate and ammonia as part of the biosynthesis of pyridoxal 5'-phosphate. The resulting ammonia molecule is channeled to the active site of PdxS. In Niallia circulans (Bacillus circulans), this protein is Pyridoxal 5'-phosphate synthase subunit PdxT.